We begin with the raw amino-acid sequence, 466 residues long: Cysteine--tRNA ligase (466 aa).

Residue Cys-28 coordinates Zn(2+). A 'HIGH' region motif is present at residues 30–40; it reads PTVYNFFHIGN. Positions 208, 233, and 237 each coordinate Zn(2+). Positions 265–269 match the 'KMSKS' region motif; the sequence is KMSKS. ATP is bound at residue Lys-268.

The protein belongs to the class-I aminoacyl-tRNA synthetase family. In terms of assembly, monomer. Zn(2+) serves as cofactor.

It localises to the cytoplasm. It catalyses the reaction tRNA(Cys) + L-cysteine + ATP = L-cysteinyl-tRNA(Cys) + AMP + diphosphate. This chain is Cysteine--tRNA ligase, found in Clostridium perfringens (strain ATCC 13124 / DSM 756 / JCM 1290 / NCIMB 6125 / NCTC 8237 / Type A).